The chain runs to 618 residues: MPEYTLLADNIRENIVHFDPNGLFDNLHTIVHEDDSQENEEAEHFNYDQVLDKSLLSRGSIVGLGLGLMSPVLGMCTSMAIGLINGGPLTIMLGFLISGVCIWFSSLSLGEIVSKFPMELHVGSAMLAPEKLKLVCSWYTGWLMLIGNWTMSTSITFAGAQLTISLILMTNSNLISEAHLIFYTVIVFYLVVTVVGLVNLKFARFIETINKVCVYWIIYAIIFIDILLLVFHKGKFRSLKYALFHFDNNLSGYKSAFLSFIIGFQQSNFTLQGFSMLPALADEVKVPEKDIPRGMSNAVLLSAFSGVIFLIPIMLILPDNDLLFTNHKVLPIVNIFTKSTDSVVLSFFLVLLILGNLLFSGIGSITTSSRAVYSFSRDQAIPYYDKWTYVEPDSQSKVPKNSVVLSMIISYFLGLLALISTAAFNAFIGAAVLCLCSATFIPLVLVLFTRRRAIRSAPVKIRYKFGWFINIVSIVWLLLSMVSVCLPTQVPVTFKTMNYALMVYVFCILVITGLYFKWGKYNFRLPLADDIKAPIPSDAEETVFELEDSNVEHTLNSGTTVKESVENNSEEGFIKVHPKSSTENPFEENEENVITDYGDEHHTAEQEFDLADDRRYDI.

The Cytoplasmic portion of the chain corresponds to 1–60; it reads MPEYTLLADNIRENIVHFDPNGLFDNLHTIVHEDDSQENEEAEHFNYDQVLDKSLLSRGS. Residues 61–84 form a helical membrane-spanning segment; it reads IVGLGLGLMSPVLGMCTSMAIGLI. Residues 85-90 are Extracellular-facing; it reads NGGPLT. The chain crosses the membrane as a helical span at residues 91–110; the sequence is IMLGFLISGVCIWFSSLSLG. The Cytoplasmic segment spans residues 111 to 131; it reads EIVSKFPMELHVGSAMLAPEK. The helical transmembrane segment at 132–148 threads the bilayer; sequence LKLVCSWYTGWLMLIGN. The Extracellular segment spans residues 149–154; it reads WTMSTS. A helical membrane pass occupies residues 155-171; that stretch reads ITFAGAQLTISLILMTN. The Cytoplasmic segment spans residues 172–179; the sequence is SNLISEAH. The chain crosses the membrane as a helical span at residues 180 to 200; that stretch reads LIFYTVIVFYLVVTVVGLVNL. Residues 201-211 are Extracellular-facing; it reads KFARFIETINK. Residues 212–231 form a helical membrane-spanning segment; sequence VCVYWIIYAIIFIDILLLVF. At 232-297 the chain is on the cytoplasmic side; that stretch reads HKGKFRSLKY…EKDIPRGMSN (66 aa). A helical transmembrane segment spans residues 298-317; sequence AVLLSAFSGVIFLIPIMLIL. The Extracellular segment spans residues 318–342; that stretch reads PDNDLLFTNHKVLPIVNIFTKSTDS. The helical transmembrane segment at 343–367 threads the bilayer; that stretch reads VVLSFFLVLLILGNLLFSGIGSITT. The Cytoplasmic segment spans residues 368–402; the sequence is SSRAVYSFSRDQAIPYYDKWTYVEPDSQSKVPKNS. Residues 403–419 traverse the membrane as a helical segment; the sequence is VVLSMIISYFLGLLALI. Residues 420-425 are Extracellular-facing; sequence STAAFN. A helical transmembrane segment spans residues 426 to 449; sequence AFIGAAVLCLCSATFIPLVLVLFT. Topologically, residues 450–464 are cytoplasmic; it reads RRRAIRSAPVKIRYK. The helical transmembrane segment at 465–486 threads the bilayer; the sequence is FGWFINIVSIVWLLLSMVSVCL. The Extracellular segment spans residues 487–498; that stretch reads PTQVPVTFKTMN. Residues 499 to 516 form a helical membrane-spanning segment; the sequence is YALMVYVFCILVITGLYF. The Cytoplasmic portion of the chain corresponds to 517–618; that stretch reads KWGKYNFRLP…DLADDRRYDI (102 aa). Position 569 is a phosphoserine (Ser569). The interval 576–618 is disordered; it reads VHPKSSTENPFEENEENVITDYGDEHHTAEQEFDLADDRRYDI. A compositionally biased stretch (basic and acidic residues) spans 598–618; sequence GDEHHTAEQEFDLADDRRYDI.

It belongs to the amino acid-polyamine-organocation (APC) superfamily.

The protein localises to the golgi apparatus membrane. In terms of biological role, required for polyamine transport. Transports putrescine effectively and spermidine less effectively. In Saccharomyces cerevisiae (strain ATCC 204508 / S288c) (Baker's yeast), this protein is Polyamine transporter TPO5 (TPO5).